The sequence spans 199 residues: Recombination protein RecR (199 aa).

The segment at 58 to 73 (CRTCFSLSDQPECRIC) adopts a C4-type zinc-finger fold. The Toprim domain maps to 81-176 (SIICVVEKPT…NVTRIASGVP (96 aa)).

It belongs to the RecR family.

May play a role in DNA repair. It seems to be involved in an RecBC-independent recombinational process of DNA repair. It may act with RecF and RecO. The chain is Recombination protein RecR from Desulforapulum autotrophicum (strain ATCC 43914 / DSM 3382 / VKM B-1955 / HRM2) (Desulfobacterium autotrophicum).